The sequence spans 451 residues: tRNA-2-methylthio-N(6)-dimethylallyladenosine synthase (451 aa).

The 118-residue stretch at 3–120 folds into the MTTase N-terminal domain; it reads LKLHIKTYGC…LPEMINHVRI (118 aa). C12, C49, C83, C157, C161, and C164 together coordinate [4Fe-4S] cluster. The 233-residue stretch at 143 to 375 folds into the Radical SAM core domain; the sequence is QAKGPTAFVS…QECIRKQAMK (233 aa). A TRAM domain is found at 378–441; it reads QAMKGTVQCI…SNSLRGELIS (64 aa).

Belongs to the methylthiotransferase family. MiaB subfamily. In terms of assembly, monomer. [4Fe-4S] cluster is required as a cofactor.

Its subcellular location is the cytoplasm. The catalysed reaction is N(6)-dimethylallyladenosine(37) in tRNA + (sulfur carrier)-SH + AH2 + 2 S-adenosyl-L-methionine = 2-methylsulfanyl-N(6)-dimethylallyladenosine(37) in tRNA + (sulfur carrier)-H + 5'-deoxyadenosine + L-methionine + A + S-adenosyl-L-homocysteine + 2 H(+). Its function is as follows. Catalyzes the methylthiolation of N6-(dimethylallyl)adenosine (i(6)A), leading to the formation of 2-methylthio-N6-(dimethylallyl)adenosine (ms(2)i(6)A) at position 37 in tRNAs that read codons beginning with uridine. In Baumannia cicadellinicola subsp. Homalodisca coagulata, this protein is tRNA-2-methylthio-N(6)-dimethylallyladenosine synthase.